The sequence spans 1085 residues: DNA polymerase (1085 aa).

Residues 1059–1085 (YDQKRPNPRPQEPLLENPFWDDSSQTA) are disordered.

It belongs to the DNA polymerase type-B family. As to quaternary structure, heterodimer with the terminal protein; this heterodimer binds to bp 9 to 18 of the genome. Forms a complex with viral pTP, DBP and hosts NFIA and POU2F1/OCT1 for initiation of replication.

It is found in the host nucleus. The catalysed reaction is DNA(n) + a 2'-deoxyribonucleoside 5'-triphosphate = DNA(n+1) + diphosphate. In terms of biological role, eukaryotic-type DNA polymerase involved in viral genomic replication. DNA synthesis is protein primed, and acts in a strand displacement replication. Its function is as follows. Eukaryotic-type DNA polymerase involved in viral genomic replication. DNA synthesis is protein primed, and acts in a strand displacement replication. Assembles in complex with viral pTP, DBP, host NFIA and host POU2F1/OCT1 on viral origin of replication. The polymerase covalently transfers dCMP onto pTP, thereby initiating complementary strand synthesis. This is DNA polymerase from Pantherophis guttatus (Corn snake).